The sequence spans 361 residues: Phospho-N-acetylmuramoyl-pentapeptide-transferase (361 aa).

Helical transmembrane passes span arginine 25 to isoleucine 45, threonine 73 to leucine 93, tyrosine 97 to tryptophan 117, methionine 134 to leucine 154, valine 168 to threonine 188, glycine 200 to alanine 220, valine 240 to tyrosine 260, valine 264 to isoleucine 284, isoleucine 289 to valine 309, and glutamine 338 to leucine 358.

Belongs to the glycosyltransferase 4 family. MraY subfamily. Requires Mg(2+) as cofactor.

It is found in the cell inner membrane. It carries out the reaction UDP-N-acetyl-alpha-D-muramoyl-L-alanyl-gamma-D-glutamyl-meso-2,6-diaminopimeloyl-D-alanyl-D-alanine + di-trans,octa-cis-undecaprenyl phosphate = di-trans,octa-cis-undecaprenyl diphospho-N-acetyl-alpha-D-muramoyl-L-alanyl-D-glutamyl-meso-2,6-diaminopimeloyl-D-alanyl-D-alanine + UMP. Its pathway is cell wall biogenesis; peptidoglycan biosynthesis. Functionally, catalyzes the initial step of the lipid cycle reactions in the biosynthesis of the cell wall peptidoglycan: transfers peptidoglycan precursor phospho-MurNAc-pentapeptide from UDP-MurNAc-pentapeptide onto the lipid carrier undecaprenyl phosphate, yielding undecaprenyl-pyrophosphoryl-MurNAc-pentapeptide, known as lipid I. The chain is Phospho-N-acetylmuramoyl-pentapeptide-transferase from Laribacter hongkongensis (strain HLHK9).